A 678-amino-acid polypeptide reads, in one-letter code: Protein MALE DISCOVERER 2 (678 aa).

A signal peptide spans methionine 1–serine 25. The Extracellular segment spans residues leucine 26 to tyrosine 323. Residue asparagine 52 is glycosylated (N-linked (GlcNAc...) asparagine). 4 LRR repeats span residues lysine 71–serine 94, aspartate 95–phenylalanine 117, asparagine 119–glycine 141, and serine 143–arginine 164. A disordered region spans residues leucine 247–serine 314. The segment covering lysine 296–asparagine 311 has biased composition (polar residues). Residues valine 324–cysteine 344 form a helical membrane-spanning segment. Over arginine 345 to threonine 678 the chain is Cytoplasmic. A Protein kinase domain is found at lysine 346 to isoleucine 651.

The protein belongs to the protein kinase superfamily. Ser/Thr protein kinase family. Expressed in pollen tubes and seedlings.

It is found in the endomembrane system. It catalyses the reaction L-seryl-[protein] + ATP = O-phospho-L-seryl-[protein] + ADP + H(+). The enzyme catalyses L-threonyl-[protein] + ATP = O-phospho-L-threonyl-[protein] + ADP + H(+). In terms of biological role, involved in the pollen tube perception of the female signal by binding an unidentified female attractant. May be involved in the regulation of root hairs development. This Arabidopsis thaliana (Mouse-ear cress) protein is Protein MALE DISCOVERER 2 (MDIS2).